Reading from the N-terminus, the 94-residue chain is uncharacterized protein (94 aa).

This is an uncharacterized protein from Homo sapiens (Human).